We begin with the raw amino-acid sequence, 1752 residues long: Serine protease/ABC transporter B family protein tagA (1752 aa).

The N-terminal stretch at 1-24 (MNKKLFIFGLSLFLFLFIFNLSLS) is a signal peptide. N-linked (GlcNAc...) asparagine glycosylation occurs at Asn20. The region spanning 280–696 (HYSIQSGSAS…FGNIQLSKLI (417 aa)) is the Peptidase S8 domain. Active-site charge relay system residues include Asp312 and His352. Residues Asn400 and Asn557 are each glycosylated (N-linked (GlcNAc...) asparagine). Catalysis depends on Ser625, which acts as the Charge relay system. N-linked (GlcNAc...) asparagine glycosylation is found at Asn653, Asn785, and Asn823. Residues 909–929 (IVLLGIFGIIIVGAVIFVLVC) form a helical membrane-spanning segment. The tract at residues 946–1032 (DKGGDGNSIR…QNNSPQYDED (87 aa)) is disordered. Over residues 962-994 (NNNNNNNNNNNNNNNNNNNNNNNNNNNNNNNNN) the composition is skewed to low complexity. Asn993 is a glycosylation site (N-linked (GlcNAc...) asparagine). Residues 995 to 1004 (SNGKQSNIEL) are compositionally biased toward polar residues. Positions 1013–1028 (GTPNGDDQQQQNNSPQ) are enriched in low complexity. Helical transmembrane passes span 1058–1078 (ILGL…AVPL), 1102–1122 (FALI…LLAL), 1174–1194 (IPHM…LFII), 1200–1220 (LVVL…GGYI), 1285–1305 (TSGI…SSLV), and 1315–1335 (LIAF…VASL). Residues 1059-1341 (LGLALFLSFI…VASLYTTYKS (283 aa)) form the ABC transmembrane type-1 domain. The ABC transporter domain maps to 1374–1610 (IQFNKVSFAY…KGMFYDFVQI (237 aa)). An ATP-binding site is contributed by 1409 to 1416 (GPSGGGKS). The interval 1621-1686 (IQLPSNSRNT…SRSPPPMWRQ (66 aa)) is disordered. Over residues 1631–1642 (RNADKLRNRSET) the composition is skewed to basic and acidic residues. Asn1638, Asn1670, and Asn1694 each carry an N-linked (GlcNAc...) asparagine glycan.

It in the C-terminal section; belongs to the ABC transporter superfamily. ABCB family. Multidrug resistance exporter (TC 3.A.1.201) subfamily. In the N-terminal section; belongs to the peptidase S8 family.

It localises to the membrane. Functionally, required for a general cell fate determination at the onset of development. Required for the specification of an initial population of prespore cells in which tagA is expressed. Required for normal SDF-2 signaling during spore encapsulation. This Dictyostelium discoideum (Social amoeba) protein is Serine protease/ABC transporter B family protein tagA (tagA).